Consider the following 306-residue polypeptide: Erythromycin 3''-O-methyltransferase (306 aa).

S-adenosyl-L-methionine contacts are provided by leucine 157 and histidine 162.

Belongs to the methyltransferase superfamily.

It carries out the reaction erythromycin C + S-adenosyl-L-methionine = erythromycin A + S-adenosyl-L-homocysteine + H(+). The catalysed reaction is erythromycin D + S-adenosyl-L-methionine = erythromycin B + S-adenosyl-L-homocysteine + H(+). The protein operates within antibiotic biosynthesis; erythromycin biosynthesis. In terms of biological role, S-adenosyl-L-methionine-dependent O-methyltransferase that catalyzes the last step in the erythromycin biosynthesis pathway. Methylates the position 3 of the mycarosyl moiety of erythromycin C, forming the most active form of the antibiotic, erythromycin A. Can also methylate the precursor erythromycin D, forming erythromycin B. The protein is Erythromycin 3''-O-methyltransferase (eryG) of Saccharopolyspora erythraea (strain ATCC 11635 / DSM 40517 / JCM 4748 / NBRC 13426 / NCIMB 8594 / NRRL 2338).